Here is a 449-residue protein sequence, read N- to C-terminus: Bifunctional protein GlmU (449 aa).

The segment at 1–231 (MVRNCLSIVL…FDNVIGINNC (231 aa)) is pyrophosphorylase. UDP-N-acetyl-alpha-D-glucosamine contacts are provided by residues 10-13 (LAAG), lysine 24, glutamine 77, and 82-83 (GT). Aspartate 107 serves as a coordination point for Mg(2+). UDP-N-acetyl-alpha-D-glucosamine is bound by residues glycine 143, glutamate 157, asparagine 172, and asparagine 229. Asparagine 229 is a binding site for Mg(2+). Residues 232-252 (FELFEADALWQKRKARDLMLS) are linker. The N-acetyltransferase stretch occupies residues 253 to 449 (GVTILKPESV…AHLSKNKRNK (197 aa)). 2 residues coordinate UDP-N-acetyl-alpha-D-glucosamine: arginine 318 and lysine 336. Catalysis depends on histidine 348, which acts as the Proton acceptor. UDP-N-acetyl-alpha-D-glucosamine is bound by residues tyrosine 351 and asparagine 362. Acetyl-CoA-binding positions include alanine 365, 371-372 (NY), serine 390, serine 408, and arginine 425.

This sequence in the N-terminal section; belongs to the N-acetylglucosamine-1-phosphate uridyltransferase family. In the C-terminal section; belongs to the transferase hexapeptide repeat family. In terms of assembly, homotrimer. It depends on Mg(2+) as a cofactor.

It localises to the cytoplasm. It carries out the reaction alpha-D-glucosamine 1-phosphate + acetyl-CoA = N-acetyl-alpha-D-glucosamine 1-phosphate + CoA + H(+). It catalyses the reaction N-acetyl-alpha-D-glucosamine 1-phosphate + UTP + H(+) = UDP-N-acetyl-alpha-D-glucosamine + diphosphate. The protein operates within nucleotide-sugar biosynthesis; UDP-N-acetyl-alpha-D-glucosamine biosynthesis; N-acetyl-alpha-D-glucosamine 1-phosphate from alpha-D-glucosamine 6-phosphate (route II): step 2/2. Its pathway is nucleotide-sugar biosynthesis; UDP-N-acetyl-alpha-D-glucosamine biosynthesis; UDP-N-acetyl-alpha-D-glucosamine from N-acetyl-alpha-D-glucosamine 1-phosphate: step 1/1. It participates in bacterial outer membrane biogenesis; LPS lipid A biosynthesis. In terms of biological role, catalyzes the last two sequential reactions in the de novo biosynthetic pathway for UDP-N-acetylglucosamine (UDP-GlcNAc). The C-terminal domain catalyzes the transfer of acetyl group from acetyl coenzyme A to glucosamine-1-phosphate (GlcN-1-P) to produce N-acetylglucosamine-1-phosphate (GlcNAc-1-P), which is converted into UDP-GlcNAc by the transfer of uridine 5-monophosphate (from uridine 5-triphosphate), a reaction catalyzed by the N-terminal domain. The chain is Bifunctional protein GlmU from Bartonella bacilliformis (strain ATCC 35685 / KC583 / Herrer 020/F12,63).